We begin with the raw amino-acid sequence, 260 residues long: Phosphatidate cytidylyltransferase (260 aa).

7 helical membrane-spanning segments follow: residues 9–29 (IIAL…LMLF), 46–66 (MIKL…IIML), 70–90 (AGDW…FILL), 102–122 (FMDA…FMYF), 130–150 (LHYI…AYIF), 172–192 (FIGG…FVDF), and 196–216 (IWLL…GDLV).

Belongs to the CDS family.

It localises to the cell membrane. It carries out the reaction a 1,2-diacyl-sn-glycero-3-phosphate + CTP + H(+) = a CDP-1,2-diacyl-sn-glycerol + diphosphate. Its pathway is phospholipid metabolism; CDP-diacylglycerol biosynthesis; CDP-diacylglycerol from sn-glycerol 3-phosphate: step 3/3. This is Phosphatidate cytidylyltransferase (cdsA) from Staphylococcus haemolyticus (strain JCSC1435).